Here is a 311-residue protein sequence, read N- to C-terminus: Ornithine carbamoyltransferase (311 aa).

Carbamoyl phosphate is bound by residues 52-55 (STRT), glutamine 79, arginine 103, and 129-132 (HPVQ). Residues asparagine 167, aspartate 226, and 230–231 (SM) contribute to the L-ornithine site. Carbamoyl phosphate contacts are provided by residues 266–267 (CL) and arginine 294.

This sequence belongs to the aspartate/ornithine carbamoyltransferase superfamily. OTCase family.

It localises to the cytoplasm. The enzyme catalyses carbamoyl phosphate + L-ornithine = L-citrulline + phosphate + H(+). Its pathway is amino-acid biosynthesis; L-arginine biosynthesis; L-arginine from L-ornithine and carbamoyl phosphate: step 1/3. Its function is as follows. Reversibly catalyzes the transfer of the carbamoyl group from carbamoyl phosphate (CP) to the N(epsilon) atom of ornithine (ORN) to produce L-citrulline. In Sorangium cellulosum (strain So ce56) (Polyangium cellulosum (strain So ce56)), this protein is Ornithine carbamoyltransferase.